Reading from the N-terminus, the 144-residue chain is Large ribosomal subunit protein uL15 (144 aa).

The segment at 1 to 55 is disordered; it reads MQLNELKPVAGSRFKRLRKGRGLSSGHGFTSGRGTKGQKAHGKTRLGFEGGQMPL. The span at 23-35 shows a compositional bias: gly residues; that stretch reads LSSGHGFTSGRGT.

This sequence belongs to the universal ribosomal protein uL15 family. Part of the 50S ribosomal subunit.

Functionally, binds to the 23S rRNA. In Limosilactobacillus fermentum (strain NBRC 3956 / LMG 18251) (Lactobacillus fermentum), this protein is Large ribosomal subunit protein uL15.